Consider the following 271-residue polypeptide: Expansin-B1 (271 aa).

The first 24 residues, 1–24, serve as a signal peptide directing secretion; sequence MQLFPVILPTLCVFLHLLISGSGS. The region spanning 58 to 169 is the Expansin-like EG45 domain; the sequence is GGACGYGSLV…RRTACKYRGK (112 aa). Disulfide bonds link C61–C90, C93–C164, and C98–C104. The region spanning 182-263 is the Expansin-like CBD domain; it reads YWLSLLIEYE…NWVPKATYTS (82 aa). An N-linked (GlcNAc...) asparagine glycan is attached at N242.

Belongs to the expansin family. Expansin B subfamily.

It is found in the secreted. Its subcellular location is the cell wall. The protein localises to the membrane. Its function is as follows. May cause loosening and extension of plant cell walls by disrupting non-covalent bonding between cellulose microfibrils and matrix glucans. No enzymatic activity has been found. The polypeptide is Expansin-B1 (EXPB1) (Arabidopsis thaliana (Mouse-ear cress)).